The primary structure comprises 946 residues: C-1-tetrahydrofolate synthase, cytoplasmic (946 aa).

Residues 2–319 (AGQVLDGKAC…PPLPLKLLTP (318 aa)) are methylenetetrahydrofolate dehydrogenase and cyclohydrolase. Substrate contacts are provided by residues 51-55 (YVRMK) and 98-100 (VQL). 169–171 (GRS) is an NADP(+) binding site. The residue at position 176 (Ser-176) is a Phosphoserine. Ser-194 contacts NADP(+). 277–281 (PGGVG) serves as a coordination point for substrate. A Phosphothreonine modification is found at Thr-318. The segment at 320–946 (VPSDIDISRA…DDDGEIDGLF (627 aa)) is formyltetrahydrofolate synthetase. Ser-322 carries the post-translational modification Phosphoserine. 384–391 (TPLGEGKS) provides a ligand contact to ATP.

The protein in the N-terminal section; belongs to the tetrahydrofolate dehydrogenase/cyclohydrolase family. It in the C-terminal section; belongs to the formate--tetrahydrofolate ligase family. In terms of assembly, homodimer.

The protein localises to the cytoplasm. Its subcellular location is the nucleus. It catalyses the reaction (6R)-5,10-methylene-5,6,7,8-tetrahydrofolate + NADP(+) = (6R)-5,10-methenyltetrahydrofolate + NADPH. The catalysed reaction is (6R)-5,10-methenyltetrahydrofolate + H2O = (6R)-10-formyltetrahydrofolate + H(+). It carries out the reaction (6S)-5,6,7,8-tetrahydrofolate + formate + ATP = (6R)-10-formyltetrahydrofolate + ADP + phosphate. The protein operates within one-carbon metabolism; tetrahydrofolate interconversion. Cytoplasmic isozyme of C-1-tetrahydrofolate synthase. The trifunctional enzyme catalyzes the interconversion of the one-carbon derivatives of tetrahydrofolate (THF) between different oxidation states by the enzymatic activities 10-formyltetrahydrofolate synthetase, 5,lO-methenyltetrahydrofolate cyclohydrolase, and 5,lO-methylenetetrahydrofolate dehydrogenase. Involved in the generation of one-carbon intermediates in the biosynthesis of the purine bases. The protein is C-1-tetrahydrofolate synthase, cytoplasmic (ADE3) of Saccharomyces cerevisiae (strain ATCC 204508 / S288c) (Baker's yeast).